The primary structure comprises 559 residues: Transcription factor tstO (559 aa).

The zn(2)-C6 fungal-type DNA-binding region spans 23 to 50 (CDACQSAKVRCGREKPTCRRCQNQGKTC). 2 disordered regions span residues 166–316 (GPST…TGFS) and 453–477 (ASPPPSIFDNNNTSTTTTTSSISTA). The span at 222-232 (SSESLSLEPSS) shows a compositional bias: low complexity. The segment covering 255–267 (TRGSQKISPNPHS) has biased composition (polar residues). Basic and acidic residues predominate over residues 268 to 279 (IDSRTSSRDKSF). 2 stretches are compositionally biased toward low complexity: residues 286–316 (STLGSRTPNTTTTSSSASSVGLTGSSTTGFS) and 462–477 (NNNTSTTTTTSSISTA).

It is found in the nucleus. Its function is as follows. Transcription factore; part of the gene cluster that mediates the biosynthesis of the antihypercholesterolemic agents phomoidrides which are dimeric anhydrides. Probably regulates the expression of the genes from the cluster. This chain is Transcription factor tstO, found in Talaromyces stipitatus (strain ATCC 10500 / CBS 375.48 / QM 6759 / NRRL 1006) (Penicillium stipitatum).